Here is a 398-residue protein sequence, read N- to C-terminus: MYLEQLSLTDFRSYQQADLGLEPGVNVFIGSNGLGKTNLVEALGYLASLSSHRVSQDGPLIRFGAEQALIRGNLVRGTQRLGLEVEINASRANRARINRANPVRAREILGLCRTVLFAPEDLSLVKGDPGNRRRFLDDLLQSLHPRFAGLRADYERVLKQRNALLKSARGHSRSRQAPSADFLSTIEVWDQHFANHAAQLLSARLKVLEQLKPEMSRAYQELTDGSKELSARYRSSLDGYQEDSDDAAEIHDDEAASLVSASVESLTEHYLLALAAVRQREIERGLTLIGPHRDEVELGLGQAPARGYASHGETWSVALALRLASYYVLKADQEIDGADPILVLDDVFAELDSSRRSKLAHMVAGAEQVLVTAAVDDDVPAELSGRRIRVSAIGVVDD.

An ATP-binding site is contributed by 30–37 (GSNGLGKT).

The protein belongs to the RecF family.

It is found in the cytoplasm. In terms of biological role, the RecF protein is involved in DNA metabolism; it is required for DNA replication and normal SOS inducibility. RecF binds preferentially to single-stranded, linear DNA. It also seems to bind ATP. This Renibacterium salmoninarum (strain ATCC 33209 / DSM 20767 / JCM 11484 / NBRC 15589 / NCIMB 2235) protein is DNA replication and repair protein RecF.